We begin with the raw amino-acid sequence, 306 residues long: Cytochrome P450 monooxygenase aclO (306 aa).

C237 is a binding site for heme.

Belongs to the cytochrome P450 family. Heme serves as cofactor.

It participates in mycotoxin biosynthesis. Cytochrome P450 monooxygenase; part of the gene cluster that mediates the biosynthesis of aspirochlorine (or antibiotic A30641), an unusual halogenated spiro compound with distinctive antifungal properties due to selective inhibition of protein biosynthesis, and which is also active against bacteria, viruses, and murine tumor cells. The non-ribosomal peptide synthetase (NRPS) aclP is responsible the formation of the diketopiperazine (DKP) core from the condensation of 2 phenylalanine residues. One Phe residue is tailored into chlorotyrosine by hydroxylation and chlorination, whereas the second Phe undergoes an unprecedented C-C bond cleavage to be converted into glycine. After formation of the DKP, sulfur is incorporated into the DKP by conjugation with glutathione by aclG, followed by its stepwise degradation to the thiol by aclI, aclJ and aclK, and the dithiol oxidation by aclT. In addition, oxygenases (aclB, aclC, aclL and aclO) and O-methyltransferases (aclM and aclU) act as tailoring enzymes to produce the intermediate dechloroaspirochlorine. Ultimately, chlorination of dechloroaspirochlorine by the halogenase aclH is the last step in the aspirochlorine pathway. The protein is Cytochrome P450 monooxygenase aclO of Aspergillus oryzae (strain ATCC 42149 / RIB 40) (Yellow koji mold).